Reading from the N-terminus, the 445-residue chain is MAKYKVGMVSLGCDKNRVDSEIMLGMVQNEYELTNNPKEADIIIVNTCGFIEKAKQESINTILDMAKYKTSHNCKLLIATGCLTQRYGDELLELMPEIDIMLGVNDYAKINEAIMNFINGNNEKVKATNYSDVSINEGLRLITTDKATAYLRIAEGCDNFCTYCIIPKIRGKFRSRALESIVEEAKKLAENGVKELILIAQDTTNYGIDIYGEKKLHLVLRELAKIEGIEWIRVLYCYPEAIYDELIKEISVNDKVCNYLDLPIQHISNNVLKRMGRKTTKEEIIGKINDLRKNVPNIVLRTSLIVGFPGESCEDFNELKDFIKTIKLDKVGVFTYSREEGTPAAIMEDQIDEEVKKAREEEIMLLQKELSEEINKNKLGREYDVLIEKFNGEYYIGRSYEMAPDIDGCIYVKGNGAKKDQFCKVKIEKALEYDLVGVVCNESCK.

The MTTase N-terminal domain occupies 4 to 119; the sequence is YKVGMVSLGC…INEAIMNFIN (116 aa). 6 residues coordinate [4Fe-4S] cluster: cysteine 13, cysteine 48, cysteine 82, cysteine 157, cysteine 161, and cysteine 164. A Radical SAM core domain is found at 143 to 373; sequence TTDKATAYLR…MLLQKELSEE (231 aa). A TRAM domain is found at 376–441; it reads KNKLGREYDV…EYDLVGVVCN (66 aa).

The protein belongs to the methylthiotransferase family. RimO subfamily. [4Fe-4S] cluster serves as cofactor.

The protein resides in the cytoplasm. The catalysed reaction is L-aspartate(89)-[ribosomal protein uS12]-hydrogen + (sulfur carrier)-SH + AH2 + 2 S-adenosyl-L-methionine = 3-methylsulfanyl-L-aspartate(89)-[ribosomal protein uS12]-hydrogen + (sulfur carrier)-H + 5'-deoxyadenosine + L-methionine + A + S-adenosyl-L-homocysteine + 2 H(+). Catalyzes the methylthiolation of an aspartic acid residue of ribosomal protein uS12. In Clostridium perfringens (strain SM101 / Type A), this protein is Ribosomal protein uS12 methylthiotransferase RimO.